The sequence spans 240 residues: Ribonuclease PH (240 aa).

Phosphate contacts are provided by residues arginine 87 and 125-127 (GTR).

It belongs to the RNase PH family. In terms of assembly, homohexameric ring arranged as a trimer of dimers.

The enzyme catalyses tRNA(n+1) + phosphate = tRNA(n) + a ribonucleoside 5'-diphosphate. In terms of biological role, phosphorolytic 3'-5' exoribonuclease that plays an important role in tRNA 3'-end maturation. Removes nucleotide residues following the 3'-CCA terminus of tRNAs; can also add nucleotides to the ends of RNA molecules by using nucleoside diphosphates as substrates, but this may not be physiologically important. Probably plays a role in initiation of 16S rRNA degradation (leading to ribosome degradation) during starvation. This Pseudomonas syringae pv. syringae (strain B728a) protein is Ribonuclease PH.